Here is a 442-residue protein sequence, read N- to C-terminus: Proline--tRNA ligase (442 aa).

The protein belongs to the class-II aminoacyl-tRNA synthetase family. ProS type 2 subfamily. In terms of assembly, homodimer.

It localises to the cytoplasm. It catalyses the reaction tRNA(Pro) + L-proline + ATP = L-prolyl-tRNA(Pro) + AMP + diphosphate. In terms of biological role, catalyzes the attachment of proline to tRNA(Pro) in a two-step reaction: proline is first activated by ATP to form Pro-AMP and then transferred to the acceptor end of tRNA(Pro). In Chelativorans sp. (strain BNC1), this protein is Proline--tRNA ligase.